Consider the following 496-residue polypeptide: 1-aminocyclopropane-1-carboxylate synthase 2 (496 aa).

Residues E55 and Y93 each coordinate substrate. K279 is modified (N6-(pyridoxal phosphate)lysine). S483, S488, and S491 each carry phosphoserine.

Belongs to the class-I pyridoxal-phosphate-dependent aminotransferase family. Homodimer and heterodimer. In vivo, the relevance of heterodimerization with other ACS enzymes is however unsure. Interacts with GRF3. Requires pyridoxal 5'-phosphate as cofactor. In terms of processing, phosphorylated on serine residue by MAP kinase (MPK6). Post-translationally, may be processed at its C-terminus. As to expression, high in developing leaves and in flowers. Expressed in roots and siliques.

It catalyses the reaction S-adenosyl-L-methionine = 1-aminocyclopropane-1-carboxylate + S-methyl-5'-thioadenosine + H(+). Its pathway is alkene biosynthesis; ethylene biosynthesis via S-adenosyl-L-methionine; ethylene from S-adenosyl-L-methionine: step 1/2. In terms of biological role, 1-aminocyclopropane-1-carboxylate synthase (ACS) enzymes catalyze the conversion of S-adenosyl-L-methionine (SAM) into 1-aminocyclopropane-1-carboxylate (ACC), a direct precursor of ethylene. This is 1-aminocyclopropane-1-carboxylate synthase 2 (ACS2) from Arabidopsis thaliana (Mouse-ear cress).